A 303-amino-acid chain; its full sequence is MKWLQIHITVDQDQVDFTETLLMSLGAVSVTLDDAEDQALLEPLPGETPLWNKVIVTGIYQEDDNDPIDVEKLKAFLQAQLPNIPMRHEQLEDQVWERAWMDYYDPIQIGEKFWIVPEWLEPPEADATNIKLDPGLAFGTGNHASTFLCLQWLGKTDLKDKVVIDYGCGSGILAVAALLLGAQKVYATDIDPQAVLATKQNAELNNVLERLYVGLPEEFNTEFKASGSQADVLVANILASPLMMLAPEFATLIKPQGEFALAGIIEEQVDDVSEVYQQYFDILNIEKREENWCRISGKRHSQA.

Residues Thr-146, Gly-167, Asp-189, and Asn-236 each coordinate S-adenosyl-L-methionine.

This sequence belongs to the methyltransferase superfamily. PrmA family.

It is found in the cytoplasm. The enzyme catalyses L-lysyl-[protein] + 3 S-adenosyl-L-methionine = N(6),N(6),N(6)-trimethyl-L-lysyl-[protein] + 3 S-adenosyl-L-homocysteine + 3 H(+). In terms of biological role, methylates ribosomal protein L11. In Acinetobacter baylyi (strain ATCC 33305 / BD413 / ADP1), this protein is Ribosomal protein L11 methyltransferase.